The sequence spans 267 residues: uncharacterized protein (267 aa).

The ABC transporter domain maps to 17-248 (LKVENLTKIF…PRDRTSIEFL (232 aa)). 53-60 (GPSGCGKT) provides a ligand contact to ATP.

It belongs to the ABC transporter superfamily.

This is an uncharacterized protein from Methanocaldococcus jannaschii (strain ATCC 43067 / DSM 2661 / JAL-1 / JCM 10045 / NBRC 100440) (Methanococcus jannaschii).